Consider the following 208-residue polypeptide: 3-isopropylmalate dehydratase small subunit (208 aa).

The protein belongs to the LeuD family. LeuD type 1 subfamily. As to quaternary structure, heterodimer of LeuC and LeuD.

The catalysed reaction is (2R,3S)-3-isopropylmalate = (2S)-2-isopropylmalate. The protein operates within amino-acid biosynthesis; L-leucine biosynthesis; L-leucine from 3-methyl-2-oxobutanoate: step 2/4. Functionally, catalyzes the isomerization between 2-isopropylmalate and 3-isopropylmalate, via the formation of 2-isopropylmaleate. The sequence is that of 3-isopropylmalate dehydratase small subunit from Granulibacter bethesdensis (strain ATCC BAA-1260 / CGDNIH1).